The primary structure comprises 192 residues: ATP-dependent Clp protease proteolytic subunit 1 (192 aa).

The active-site Nucleophile is the serine 92. Residue histidine 117 is part of the active site.

This sequence belongs to the peptidase S14 family. As to quaternary structure, fourteen ClpP subunits assemble into 2 heptameric rings which stack back to back to give a disk-like structure with a central cavity, resembling the structure of eukaryotic proteasomes.

It is found in the cytoplasm. It carries out the reaction Hydrolysis of proteins to small peptides in the presence of ATP and magnesium. alpha-casein is the usual test substrate. In the absence of ATP, only oligopeptides shorter than five residues are hydrolyzed (such as succinyl-Leu-Tyr-|-NHMec, and Leu-Tyr-Leu-|-Tyr-Trp, in which cleavage of the -Tyr-|-Leu- and -Tyr-|-Trp bonds also occurs).. In terms of biological role, cleaves peptides in various proteins in a process that requires ATP hydrolysis. Has a chymotrypsin-like activity. Plays a major role in the degradation of misfolded proteins. This is ATP-dependent Clp protease proteolytic subunit 1 from Chlamydia trachomatis serovar D (strain ATCC VR-885 / DSM 19411 / UW-3/Cx).